The chain runs to 1197 residues: DNA-directed RNA polymerase subunit beta (1197 aa).

This sequence belongs to the RNA polymerase beta chain family. In terms of assembly, the RNAP catalytic core consists of 2 alpha, 1 beta, 1 beta' and 1 omega subunit. When a sigma factor is associated with the core the holoenzyme is formed, which can initiate transcription.

It catalyses the reaction RNA(n) + a ribonucleoside 5'-triphosphate = RNA(n+1) + diphosphate. Its function is as follows. DNA-dependent RNA polymerase catalyzes the transcription of DNA into RNA using the four ribonucleoside triphosphates as substrates. The chain is DNA-directed RNA polymerase subunit beta from Streptococcus pyogenes serotype M12 (strain MGAS9429).